The sequence spans 65 residues: Large ribosomal subunit protein bL35 (65 aa).

Belongs to the bacterial ribosomal protein bL35 family.

The chain is Large ribosomal subunit protein bL35 from Thermoanaerobacter sp. (strain X514).